The chain runs to 321 residues: Tyrosine recombinase XerC (321 aa).

The Core-binding (CB) domain occupies 16–107 (SDIGQQIVRW…GLRSFARFLE (92 aa)). One can recognise a Tyr recombinase domain in the interval 128–315 (SVPKPIHMSA…DSERLLDVYR (188 aa)). Catalysis depends on residues R173, K199, H267, R270, and H293. The active-site O-(3'-phospho-DNA)-tyrosine intermediate is Y302.

This sequence belongs to the 'phage' integrase family. XerC subfamily. As to quaternary structure, forms a cyclic heterotetrameric complex composed of two molecules of XerC and two molecules of XerD.

It localises to the cytoplasm. Its function is as follows. Site-specific tyrosine recombinase, which acts by catalyzing the cutting and rejoining of the recombining DNA molecules. The XerC-XerD complex is essential to convert dimers of the bacterial chromosome into monomers to permit their segregation at cell division. It also contributes to the segregational stability of plasmids. This is Tyrosine recombinase XerC from Nitrobacter winogradskyi (strain ATCC 25391 / DSM 10237 / CIP 104748 / NCIMB 11846 / Nb-255).